Consider the following 285-residue polypeptide: Small ribosomal subunit protein uS3 (285 aa).

The KH type-2 domain maps to 39 to 107; sequence VREFLKKKLK…PVAVNIEEVR (69 aa). The interval 211–285 is disordered; the sequence is GDAPVMRGED…RAAPPAAKGE (75 aa). A compositionally biased stretch (basic and acidic residues) spans 217-241; that stretch reads RGEDRPEDDRRRRNPRGDRPGDRRG. A compositionally biased stretch (gly residues) spans 242–255; that stretch reads PGAGRGGPGAGRGP. Composition is skewed to low complexity over residues 256-267 and 276-285; these read ADGASAAPSGDA and RAAPPAAKGE.

Belongs to the universal ribosomal protein uS3 family. Part of the 30S ribosomal subunit. Forms a tight complex with proteins S10 and S14.

Its function is as follows. Binds the lower part of the 30S subunit head. Binds mRNA in the 70S ribosome, positioning it for translation. The sequence is that of Small ribosomal subunit protein uS3 from Leptothrix cholodnii (strain ATCC 51168 / LMG 8142 / SP-6) (Leptothrix discophora (strain SP-6)).